A 467-amino-acid chain; its full sequence is Histidine--tRNA ligase (467 aa).

The protein belongs to the class-II aminoacyl-tRNA synthetase family. In terms of assembly, homodimer.

Its subcellular location is the cytoplasm. The enzyme catalyses tRNA(His) + L-histidine + ATP = L-histidyl-tRNA(His) + AMP + diphosphate + H(+). This chain is Histidine--tRNA ligase, found in Gloeobacter violaceus (strain ATCC 29082 / PCC 7421).